The chain runs to 240 residues: UDP-2,3-diacylglucosamine hydrolase (240 aa).

Mn(2+) contacts are provided by D8, H10, D41, N79, and H114. 79–80 (NR) is a binding site for substrate. 5 residues coordinate substrate: D122, S160, N164, K167, and H195. The Mn(2+) site is built by H195 and H197.

This sequence belongs to the LpxH family. Mn(2+) is required as a cofactor.

Its subcellular location is the cell inner membrane. The enzyme catalyses UDP-2-N,3-O-bis[(3R)-3-hydroxytetradecanoyl]-alpha-D-glucosamine + H2O = 2-N,3-O-bis[(3R)-3-hydroxytetradecanoyl]-alpha-D-glucosaminyl 1-phosphate + UMP + 2 H(+). It participates in glycolipid biosynthesis; lipid IV(A) biosynthesis; lipid IV(A) from (3R)-3-hydroxytetradecanoyl-[acyl-carrier-protein] and UDP-N-acetyl-alpha-D-glucosamine: step 4/6. Functionally, hydrolyzes the pyrophosphate bond of UDP-2,3-diacylglucosamine to yield 2,3-diacylglucosamine 1-phosphate (lipid X) and UMP by catalyzing the attack of water at the alpha-P atom. Involved in the biosynthesis of lipid A, a phosphorylated glycolipid that anchors the lipopolysaccharide to the outer membrane of the cell. This Salmonella dublin (strain CT_02021853) protein is UDP-2,3-diacylglucosamine hydrolase.